Here is a 44-residue protein sequence, read N- to C-terminus: U17-ctenitoxin-Co1a (44 aa).

Intrachain disulfides connect C3–C20, C10–C26, C19–C40, and C28–C38.

As to expression, expressed by the venom gland.

It localises to the secreted. Its function is as follows. Omega-agatoxins are antagonists of voltage-sensitive calcium channels (Cav). Toxic to mice by intracerebroventricular injection. The protein is U17-ctenitoxin-Co1a of Ctenus ornatus (Brazilian spider).